Reading from the N-terminus, the 53-residue chain is MKLTCVLIAAMLLLAVCQLDSADATETGCKKDGSWCWIPSECCIESCLITCWY.

Positions 1–24 are cleaved as a signal peptide; that stretch reads MKLTCVLIAAMLLLAVCQLDSADA. 3 cysteine pairs are disulfide-bonded: Cys29-Cys43, Cys36-Cys47, and Cys42-Cys51.

The protein belongs to the conotoxin O1 superfamily. In terms of tissue distribution, expressed by the venom duct.

It is found in the secreted. In terms of biological role, probable neurotoxin. This is Conotoxin Cal6.27 from Californiconus californicus (California cone).